The primary structure comprises 265 residues: Probable trehalose-phosphate phosphatase (265 aa).

Asp35 (nucleophile) is an active-site residue. The Mg(2+) site is built by Asp35, Asp37, and Asp213. Residue 35 to 37 (DID) participates in substrate binding.

Belongs to the trehalose phosphatase family. Mg(2+) serves as cofactor.

The catalysed reaction is alpha,alpha-trehalose 6-phosphate + H2O = alpha,alpha-trehalose + phosphate. The protein operates within glycan biosynthesis; trehalose biosynthesis. Its function is as follows. Removes the phosphate from trehalose 6-phosphate to produce free trehalose. This chain is Probable trehalose-phosphate phosphatase (otsB), found in Sinorhizobium fredii (strain NBRC 101917 / NGR234).